A 204-amino-acid polypeptide reads, in one-letter code: Dephospho-CoA kinase (204 aa).

A DPCK domain is found at 5 to 204 (VVGLTGGIGS…YLANLVKAML (200 aa)). 13-18 (GSGKSA) contributes to the ATP binding site.

Belongs to the CoaE family.

The protein resides in the cytoplasm. The catalysed reaction is 3'-dephospho-CoA + ATP = ADP + CoA + H(+). Its pathway is cofactor biosynthesis; coenzyme A biosynthesis; CoA from (R)-pantothenate: step 5/5. In terms of biological role, catalyzes the phosphorylation of the 3'-hydroxyl group of dephosphocoenzyme A to form coenzyme A. The polypeptide is Dephospho-CoA kinase (Chromobacterium violaceum (strain ATCC 12472 / DSM 30191 / JCM 1249 / CCUG 213 / NBRC 12614 / NCIMB 9131 / NCTC 9757 / MK)).